Reading from the N-terminus, the 316-residue chain is uncharacterized protein (316 aa).

Disordered regions lie at residues 82–105 (AMAAASTGAGSSSGTNVGGSSGGN) and 238–257 (ASVSVQTTQQSRQQSTDTQE). Low complexity-rich tracts occupy residues 84–96 (AAASTGAGSSSGT) and 239–255 (SVSVQTTQQSRQQSTDT).

It belongs to the MG307/MG309/MG338 family.

This is an uncharacterized protein from Mycoplasma pneumoniae (strain ATCC 29342 / M129 / Subtype 1) (Mycoplasmoides pneumoniae).